A 214-amino-acid polypeptide reads, in one-letter code: uncharacterized protein (214 aa).

Belongs to the HHV-5 UL130 protein family. Forms the envelope pentamer complex (PC) composed of gH, gL, UL128, UL130, and UL131A. The pentamer interacts with host NRP2.

It localises to the virion membrane. Plays a role in viral entry into host cells. Forms a pentameric complex at the surface of the viral envelope together with gH, gL, UL130 and UL131. This complex is required for entry in epithelial, endothelial and myeloid host cells. Mechanistically, engages host receptor(s) including neurophilin 2/NRP2 to mediate infection. This is an uncharacterized protein from Human cytomegalovirus (strain AD169) (HHV-5).